The following is a 130-amino-acid chain: Ribosome-binding factor A (130 aa).

The tract at residues 111-130 (RDLDDVGPGATSSDEDAEQR) is disordered.

The protein belongs to the RbfA family. As to quaternary structure, monomer. Binds 30S ribosomal subunits, but not 50S ribosomal subunits or 70S ribosomes.

It is found in the cytoplasm. One of several proteins that assist in the late maturation steps of the functional core of the 30S ribosomal subunit. Associates with free 30S ribosomal subunits (but not with 30S subunits that are part of 70S ribosomes or polysomes). Required for efficient processing of 16S rRNA. May interact with the 5'-terminal helix region of 16S rRNA. This is Ribosome-binding factor A from Xanthomonas oryzae pv. oryzae (strain MAFF 311018).